Here is a 218-residue protein sequence, read N- to C-terminus: Glutathione S-transferase Mu 4 (218 aa).

Residues 2–88 enclose the GST N-terminal domain; the sequence is SMTLGYWDIR…YIARKHNLCG (87 aa). Glutathione is bound by residues 7-8, 46-50, 59-60, and 72-73; these read YW, WLNEK, NL, and QS. Residues 90–208 enclose the GST C-terminal domain; sequence TEEEKIRVDI…KSSRFLPKPL (119 aa). Y116 serves as a coordination point for substrate.

It belongs to the GST superfamily. Mu family. Homodimer. Expressed in a wide variety of tissues.

It localises to the cytoplasm. It carries out the reaction RX + glutathione = an S-substituted glutathione + a halide anion + H(+). The catalysed reaction is 1-chloro-2,4-dinitrobenzene + glutathione = 2,4-dinitrophenyl-S-glutathione + chloride + H(+). It catalyses the reaction (13S,14S)-epoxy-(4Z,7Z,9E,11E,16Z,19Z)-docosahexaenoate + glutathione = (13R)-S-glutathionyl-(14S)-hydroxy-(4Z,7Z,9E,11E,16Z,19Z)-docosahexaenoate. The enzyme catalyses leukotriene C4 = leukotriene A4 + glutathione. Conjugation of reduced glutathione to a wide number of exogenous and endogenous hydrophobic electrophiles. Catalyzes the conjugation of leukotriene A4 with reduced glutathione (GSH) to form leukotriene C4. Can also catalyze the transfer of a glutathionyl group from glutathione (GSH) to 13(S),14(S)-epoxy-docosahexaenoic acid to form maresin conjugate in tissue regeneration 1 (MCTR1), a bioactive lipid mediator that possess potent anti-inflammatory and proresolving actions. The polypeptide is Glutathione S-transferase Mu 4 (GSTM4) (Homo sapiens (Human)).